Here is an 84-residue protein sequence, read N- to C-terminus: Sec-independent protein translocase protein TatA (84 aa).

A helical membrane pass occupies residues 1–21; the sequence is MGGLQPWHWLIVIAVFVLLFG. A disordered region spans residues 46 to 84; that stretch reads MQSDSNAAKSDQPEQITSERVVVDPSTQSTSSNSDKRPA. Over residues 48–63 the composition is skewed to polar residues; the sequence is SDSNAAKSDQPEQITS.

Belongs to the TatA/E family. In terms of assembly, the Tat system comprises two distinct complexes: a TatABC complex, containing multiple copies of TatA, TatB and TatC subunits, and a separate TatA complex, containing only TatA subunits. Substrates initially bind to the TatABC complex, which probably triggers association of the separate TatA complex to form the active translocon.

The protein resides in the cell membrane. Its function is as follows. Part of the twin-arginine translocation (Tat) system that transports large folded proteins containing a characteristic twin-arginine motif in their signal peptide across membranes. TatA could form the protein-conducting channel of the Tat system. In Mycolicibacterium gilvum (strain PYR-GCK) (Mycobacterium gilvum (strain PYR-GCK)), this protein is Sec-independent protein translocase protein TatA.